The chain runs to 132 residues: Agouti-signaling protein (132 aa).

The first 22 residues, 1 to 22, serve as a signal peptide directing secretion; it reads MDVTRLLLATLLVFLCFFTAYS. Residue N39 is glycosylated (N-linked (GlcNAc...) asparagine). Residues 60 to 88 are disordered; it reads KQISRKEAEKKRSSKKEASMKKVARPRTP. The span at 63-79 shows a compositional bias: basic and acidic residues; that stretch reads SRKEAEKKRSSKKEASM. 5 cysteine pairs are disulfide-bonded: C93/C108, C100/C114, C107/C125, C111/C132, and C116/C123. The Agouti domain occupies 93 to 132; the sequence is CVATRDSCKPPAPACCDPCASCQCRFFRSACSCRVLSLNC.

It localises to the secreted. Involved in the regulation of melanogenesis. The binding of ASP to MC1R precludes alpha-MSH initiated signaling and thus blocks production of cAMP, leading to a down-regulation of eumelanogenesis (brown/black pigment) and thus increasing synthesis of pheomelanin (yellow/red pigment). The polypeptide is Agouti-signaling protein (ASIP) (Macaca cyclopis (Taiwan macaque)).